The sequence spans 182 residues: Large ribosomal subunit protein uL6 (182 aa).

Belongs to the universal ribosomal protein uL6 family. In terms of assembly, part of the 50S ribosomal subunit.

Functionally, this protein binds to the 23S rRNA, and is important in its secondary structure. It is located near the subunit interface in the base of the L7/L12 stalk, and near the tRNA binding site of the peptidyltransferase center. The polypeptide is Large ribosomal subunit protein uL6 (Carboxydothermus hydrogenoformans (strain ATCC BAA-161 / DSM 6008 / Z-2901)).